A 244-amino-acid chain; its full sequence is Carbonyl reductase [NADPH] 2 (244 aa).

11–39 (LVTGAGKGIGRDTVKALHVSGARVVAVTR) contributes to the NADP(+) binding site. Ser136 is a binding site for substrate. The active-site Proton acceptor is Tyr149. Residue Ser176 is modified to Phosphoserine.

It belongs to the short-chain dehydrogenases/reductases (SDR) family. As to quaternary structure, homotetramer. Lung (ciliated cells, non-ciliated bronchiolar cells and type-II alveolar pneumocytes). Low expression in all extrapulmonary tissues, including adipose tissue.

It is found in the mitochondrion matrix. The enzyme catalyses a secondary alcohol + NADP(+) = a ketone + NADPH + H(+). Allosteric enzyme exhibiting negative cooperativity. Activated 2-5 fold by fatty acids. Its function is as follows. May function in the pulmonary metabolism of endogenous carbonyl compounds, such as aliphatic aldehydes and ketones derived from lipid peroxidation, 3-ketosteroids and fatty aldehydes, as well as in xenobiotic metabolism. The protein is Carbonyl reductase [NADPH] 2 (CBR2) of Sus scrofa (Pig).